We begin with the raw amino-acid sequence, 428 residues long: Immunoglobulin superfamily member 11 (428 aa).

A signal peptide spans 1 to 22 (MTRRRSAPASWLLVSLLGVATS). In terms of domain architecture, Ig-like V-type spans 23 to 136 (LEVSESPGSV…DRGGRNIGVT (114 aa)). At 23–240 (LEVSESPGSV…QVISPQPRSV (218 aa)) the chain is on the extracellular side. 2 disulfides stabilise this stretch: Cys44-Cys120 and Cys165-Cys215. Asn102 is a glycosylation site (N-linked (GlcNAc...) asparagine). The Ig-like C2-type domain maps to 144–234 (PSAPQCQIQG…TCLLDLQVIS (91 aa)). The chain crosses the membrane as a helical span at residues 241 to 261 (GVIAGAVGTGAVLIVICLALI). Over 262-428 (SGAFFYWRSK…PAQSRAGSLV (167 aa)) the chain is Cytoplasmic. Arg375 is modified (omega-N-methylarginine). Residues 376–389 (GSSPQVLPRNNGSV) show a composition bias toward polar residues. The interval 376–396 (GSSPQVLPRNNGSVSRKPWPQ) is disordered.

N-glycosylated. In terms of tissue distribution, highly expressed in testis and detected in kidney and adrenal gland. In brain, expressed in commissure fibers of the corpus callosum and pyramidal cell layers of the dentate gyrus and hippocampus where it is probably expressed by both neurons and glial cells.

Its subcellular location is the cell membrane. In terms of biological role, functions as a cell adhesion molecule through homophilic interaction. Stimulates cell growth. The sequence is that of Immunoglobulin superfamily member 11 (Igsf11) from Mus musculus (Mouse).